Consider the following 606-residue polypeptide: Probable translation initiation factor IF-2 (606 aa).

One can recognise a tr-type G domain in the interval 11-230; sequence IRQPIVVVLG…LTGLVQRFMK (220 aa). Positions 20 to 27 are G1; sequence GHVDHGKT. Position 20-27 (20-27) interacts with GTP; sequence GHVDHGKT. Positions 45-49 are G2; that stretch reads EITQH. Positions 85 to 88 are G3; it reads DTPG. Residues 85–89 and 139–142 contribute to the GTP site; these read DTPGH and NKID. The segment at 139 to 142 is G4; the sequence is NKID. The segment at 207–209 is G5; it reads SAK.

This sequence belongs to the TRAFAC class translation factor GTPase superfamily. Classic translation factor GTPase family. IF-2 subfamily.

Its function is as follows. Function in general translation initiation by promoting the binding of the formylmethionine-tRNA to ribosomes. Seems to function along with eIF-2. The chain is Probable translation initiation factor IF-2 from Staphylothermus marinus (strain ATCC 43588 / DSM 3639 / JCM 9404 / F1).